Here is a 504-residue protein sequence, read N- to C-terminus: Anaerobic nitric oxide reductase transcription regulator NorR (504 aa).

Position 57 is a 4-aspartylphosphate (aspartate 57). A Sigma-54 factor interaction domain is found at 187 to 416 (MIGLSPGMTQ…LEHAIHRAVV (230 aa)). ATP contacts are provided by residues 215 to 222 (GETGTGKE) and 278 to 287 (ADNGTLFLDE). Residues 479 to 498 (WAASARMLETDVANLHRLAK) constitute a DNA-binding region (H-T-H motif).

It participates in nitrogen metabolism; nitric oxide reduction. Its function is as follows. Required for the expression of anaerobic nitric oxide (NO) reductase, acts as a transcriptional activator for at least the norVW operon. Activation also requires sigma-54. This is Anaerobic nitric oxide reductase transcription regulator NorR from Escherichia coli (strain SMS-3-5 / SECEC).